We begin with the raw amino-acid sequence, 341 residues long: Inositol monophosphatase 3 (341 aa).

A helical membrane pass occupies residues 11 to 31; sequence LGIAVFCLLGVGVIYHLYAGV. Positions 117, 157, 159, 160, and 283 each coordinate Mg(2+). E117 is a substrate binding site. Substrate is bound by residues 159 to 162 and D283; that span reads LDAT.

Belongs to the inositol monophosphatase superfamily. Mg(2+) is required as a cofactor.

It is found in the membrane. It carries out the reaction a myo-inositol phosphate + H2O = myo-inositol + phosphate. It functions in the pathway polyol metabolism; myo-inositol biosynthesis; myo-inositol from D-glucose 6-phosphate: step 2/2. The protein is Inositol monophosphatase 3 (bpnt2) of Danio rerio (Zebrafish).